Reading from the N-terminus, the 133-residue chain is Large ribosomal subunit protein uL11 (133 aa).

Belongs to the universal ribosomal protein uL11 family. In terms of assembly, part of the ribosomal stalk of the 50S ribosomal subunit. Interacts with L10 and the large rRNA to form the base of the stalk. L10 forms an elongated spine to which 2 L12 dimers bind in a sequential fashion forming a pentameric L10(L12)2(L12)2 complex. One or more lysine residues are methylated.

Forms part of the ribosomal stalk which helps the ribosome interact with GTP-bound translation factors. The protein is Large ribosomal subunit protein uL11 of Geobacillus stearothermophilus (Bacillus stearothermophilus).